We begin with the raw amino-acid sequence, 196 residues long: Putative NADH dehydrogenase/NAD(P)H nitroreductase Reut_A1586 (196 aa).

The protein belongs to the nitroreductase family. HadB/RutE subfamily. The cofactor is FMN.

The polypeptide is Putative NADH dehydrogenase/NAD(P)H nitroreductase Reut_A1586 (Cupriavidus pinatubonensis (strain JMP 134 / LMG 1197) (Cupriavidus necator (strain JMP 134))).